Reading from the N-terminus, the 186-residue chain is Small ribosomal subunit protein uS5 (186 aa).

The S5 DRBM domain maps to 20–83 (FVDKLVHINR…EAAKRDMIFV (64 aa)).

Belongs to the universal ribosomal protein uS5 family. In terms of assembly, part of the 30S ribosomal subunit. Contacts proteins S4 and S8.

In terms of biological role, with S4 and S12 plays an important role in translational accuracy. Its function is as follows. Located at the back of the 30S subunit body where it stabilizes the conformation of the head with respect to the body. In Brucella ovis (strain ATCC 25840 / 63/290 / NCTC 10512), this protein is Small ribosomal subunit protein uS5.